A 45-amino-acid chain; its full sequence is Putative UPF0377 protein YJL222W-B (45 aa).

The protein belongs to the UPF0377 family.

In Saccharomyces cerevisiae (strain ATCC 204508 / S288c) (Baker's yeast), this protein is Putative UPF0377 protein YJL222W-B.